Consider the following 191-residue polypeptide: Large ribosomal subunit protein uL6 (191 aa).

Belongs to the universal ribosomal protein uL6 family. In terms of assembly, part of the 50S ribosomal subunit.

This protein binds to the 23S rRNA, and is important in its secondary structure. It is located near the subunit interface in the base of the L7/L12 stalk, and near the tRNA binding site of the peptidyltransferase center. The sequence is that of Large ribosomal subunit protein uL6 from Cyanothece sp. (strain PCC 7425 / ATCC 29141).